The primary structure comprises 48 residues: Cytochrome b559 subunit beta (48 aa).

The helical transmembrane segment at 23–39 (WLAVHALAIPSVFFLGS) threads the bilayer. His27 serves as a coordination point for heme.

Belongs to the PsbE/PsbF family. In terms of assembly, heterodimer of an alpha subunit and a beta subunit. PSII is composed of 1 copy each of membrane proteins PsbA, PsbB, PsbC, PsbD, PsbE, PsbF, PsbH, PsbI, PsbJ, PsbK, PsbL, PsbM, PsbT, PsbX, PsbY, Psb30/Ycf12, peripheral proteins PsbO, CyanoQ (PsbQ), PsbU, PsbV and a large number of cofactors. It forms dimeric complexes. The cofactor is heme b.

It is found in the cellular thylakoid membrane. Functionally, this b-type cytochrome is tightly associated with the reaction center of photosystem II (PSII). PSII is a light-driven water:plastoquinone oxidoreductase that uses light energy to abstract electrons from H(2)O, generating O(2) and a proton gradient subsequently used for ATP formation. It consists of a core antenna complex that captures photons, and an electron transfer chain that converts photonic excitation into a charge separation. In Prochlorococcus marinus (strain MIT 9301), this protein is Cytochrome b559 subunit beta.